We begin with the raw amino-acid sequence, 127 residues long: Glycine cleavage system H protein (127 aa).

Residues 22–104 form the Lipoyl-binding domain; sequence EVVIGITHFA…YEGAWMVKVE (83 aa). At K63 the chain carries N6-lipoyllysine.

The protein belongs to the GcvH family. In terms of assembly, the glycine cleavage system is composed of four proteins: P, T, L and H. (R)-lipoate is required as a cofactor.

The glycine cleavage system catalyzes the degradation of glycine. The H protein shuttles the methylamine group of glycine from the P protein to the T protein. Functionally, is also involved in protein lipoylation via its role as an octanoyl/lipoyl carrier protein intermediate. This chain is Glycine cleavage system H protein, found in Bacillus cereus (strain G9842).